The following is a 143-amino-acid chain: Large ribosomal subunit protein uL15 (143 aa).

The segment at 1–52 (MKLNTLAPAAGSKSAPKRLGRGIGSGLGKTSGKGHKGQKARSGGYHKVGFEG) is disordered. The span at 21 to 31 (RGIGSGLGKTS) shows a compositional bias: gly residues.

This sequence belongs to the universal ribosomal protein uL15 family. Part of the 50S ribosomal subunit.

Binds to the 23S rRNA. This chain is Large ribosomal subunit protein uL15, found in Francisella tularensis subsp. mediasiatica (strain FSC147).